The chain runs to 632 residues: 2-hydroxyacyl-CoA lyase 2 (632 aa).

The helical transmembrane segment at 10 to 30 (AWGFFSSFLLLAFGTLVAALL) threads the bilayer. Residue glutamate 98 coordinates thiamine diphosphate. The thiamine pyrophosphate binding stretch occupies residues 470–550 (DFVGTAAYLV…VMALIGNDAG (81 aa)). Residues aspartate 521 and asparagine 547 each contribute to the Mg(2+) site.

Belongs to the TPP enzyme family. It depends on Mg(2+) as a cofactor. Thiamine diphosphate serves as cofactor.

The protein resides in the endoplasmic reticulum membrane. The catalysed reaction is 2-hydroxyoctadecanoyl-CoA = heptadecanal + formyl-CoA. The enzyme catalyses (2R)-hydroxyhexadecanoyl-CoA = pentadecanal + formyl-CoA. Endoplasmic reticulum 2-OH acyl-CoA lyase involved in the cleavage (C1 removal) reaction in the fatty acid alpha-oxydation in a thiamine pyrophosphate (TPP)-dependent manner. Involved in the phytosphingosine degradation pathway. This is 2-hydroxyacyl-CoA lyase 2 (ILVBL) from Bos taurus (Bovine).